A 354-amino-acid polypeptide reads, in one-letter code: Soluble interferon alpha/beta receptor OPG204 (354 aa).

A signal peptide spans 1–22; sequence MMKMTMKMMVHIYFVSLLLLLF. Ig-like C2-type domains follow at residues 68-150 and 158-240; these read IGEP…RSHV and PEIY…IVVS. Disulfide bonds link cysteine 76-cysteine 132 and cysteine 175-cysteine 224. 5 N-linked (GlcNAc...) asparagine; by host glycosylation sites follow: asparagine 120, asparagine 124, asparagine 185, asparagine 272, and asparagine 324. Residues 249 to 348 form the Ig-like V-type domain; that stretch reads PSQDHRFKLI…HNYYFEKTLT (100 aa). Cysteine 275 and cysteine 336 are disulfide-bonded.

Belongs to the interleukin-1 receptor family. Interacts with host IFNA1.

It localises to the secreted. In terms of biological role, counteracts the antiviral effects of host IFN-alpha/beta and key IFN-inducible proteins involved in viral RNA degradation suxh as host OAS1. Acts as a soluble IFN-alpha receptor and thus inhibits the interaction between host IFN-alpha and its receptor. This Homo sapiens (Human) protein is Soluble interferon alpha/beta receptor OPG204 (OPG204).